We begin with the raw amino-acid sequence, 674 residues long: DNA-directed RNA polymerase subunit beta' (674 aa).

Positions 69, 71, 87, and 90 each coordinate Zn(2+). 3 residues coordinate Mg(2+): aspartate 494, aspartate 496, and aspartate 498.

It belongs to the RNA polymerase beta' chain family. RpoC1 subfamily. In terms of assembly, in plastids the minimal PEP RNA polymerase catalytic core is composed of four subunits: alpha, beta, beta', and beta''. When a (nuclear-encoded) sigma factor is associated with the core the holoenzyme is formed, which can initiate transcription. Mg(2+) is required as a cofactor. The cofactor is Zn(2+).

It is found in the plastid. The protein resides in the chloroplast. It carries out the reaction RNA(n) + a ribonucleoside 5'-triphosphate = RNA(n+1) + diphosphate. Functionally, DNA-dependent RNA polymerase catalyzes the transcription of DNA into RNA using the four ribonucleoside triphosphates as substrates. The polypeptide is DNA-directed RNA polymerase subunit beta' (Psilotum nudum (Whisk fern)).